The sequence spans 248 residues: MTTSNRILLGVNIDHVATLRQARGTRYPDPVKAALDAEEAGADGITVHLREDRRHIQERDVLLLKDVLQTRMNFEMGVTEEMMAFAERIRPAHICLVPETRQELTTEGGLDVAGQEARIKAAVERLSKIGSEVSLFIDADERQIEASKRVGAPAIELHTGRYADAQTPSEVAEELQRIVDGVAVGLAQGLIVNAGHGLHYHNVEAVAAIKGINELNIGHALVAHALFVGFKGAVAEMKALILAAAAKA.

A 3-amino-2-oxopropyl phosphate-binding site is contributed by asparagine 12. 14–15 (DH) serves as a coordination point for 1-deoxy-D-xylulose 5-phosphate. Arginine 23 serves as a coordination point for 3-amino-2-oxopropyl phosphate. Residue histidine 48 is the Proton acceptor of the active site. 1-deoxy-D-xylulose 5-phosphate is bound by residues arginine 50 and histidine 55. The Proton acceptor role is filled by glutamate 75. Position 105 (threonine 105) interacts with 1-deoxy-D-xylulose 5-phosphate. Histidine 196 serves as the catalytic Proton donor. 3-amino-2-oxopropyl phosphate contacts are provided by residues glycine 197 and 218-219 (GH).

Belongs to the PNP synthase family. In terms of assembly, homooctamer; tetramer of dimers.

The protein localises to the cytoplasm. It carries out the reaction 3-amino-2-oxopropyl phosphate + 1-deoxy-D-xylulose 5-phosphate = pyridoxine 5'-phosphate + phosphate + 2 H2O + H(+). It participates in cofactor biosynthesis; pyridoxine 5'-phosphate biosynthesis; pyridoxine 5'-phosphate from D-erythrose 4-phosphate: step 5/5. In terms of biological role, catalyzes the complicated ring closure reaction between the two acyclic compounds 1-deoxy-D-xylulose-5-phosphate (DXP) and 3-amino-2-oxopropyl phosphate (1-amino-acetone-3-phosphate or AAP) to form pyridoxine 5'-phosphate (PNP) and inorganic phosphate. This chain is Pyridoxine 5'-phosphate synthase, found in Pseudomonas fluorescens (strain ATCC BAA-477 / NRRL B-23932 / Pf-5).